Here is an 875-residue protein sequence, read N- to C-terminus: DNA gyrase subunit A (875 aa).

The 500-residue stretch at 34–533 (LPDVRDGLKP…NSADINLEDL (500 aa)) folds into the Topo IIA-type catalytic domain. Tyr122 functions as the O-(5'-phospho-DNA)-tyrosine intermediate in the catalytic mechanism. Positions 560–566 (QRRGGKG) match the GyrA-box motif. The interval 841–875 (EPVDEEDLDTIDGSAAEGDDEIAPEVDVDDEPEEE) is disordered. Residues 857–875 (EGDDEIAPEVDVDDEPEEE) show a composition bias toward acidic residues.

The protein belongs to the type II topoisomerase GyrA/ParC subunit family. Heterotetramer, composed of two GyrA and two GyrB chains. In the heterotetramer, GyrA contains the active site tyrosine that forms a transient covalent intermediate with DNA, while GyrB binds cofactors and catalyzes ATP hydrolysis.

Its subcellular location is the cytoplasm. It carries out the reaction ATP-dependent breakage, passage and rejoining of double-stranded DNA.. In terms of biological role, a type II topoisomerase that negatively supercoils closed circular double-stranded (ds) DNA in an ATP-dependent manner to modulate DNA topology and maintain chromosomes in an underwound state. Negative supercoiling favors strand separation, and DNA replication, transcription, recombination and repair, all of which involve strand separation. Also able to catalyze the interconversion of other topological isomers of dsDNA rings, including catenanes and knotted rings. Type II topoisomerases break and join 2 DNA strands simultaneously in an ATP-dependent manner. This Shigella flexneri protein is DNA gyrase subunit A.